Reading from the N-terminus, the 212-residue chain is MKLTLVQIFFMMLLLLLGLGVGLGLGLQMAAAVLEESDQLLDEFLSSDSQDKAEATKEGLDSQSTETLLVSNKVVPPEDTIVNEDDVGGDRMLRAEVLSQSNKHYLRSDVMDRECNALMAPNLKSKDHPCIPQYVFIHEEPDTVKAVCKSPAVACDLKEGKCHKSPRPFDLTFCKLSKSGQVIPHCNYVTFILEKYILMSCSDMKVQITSKS.

A signal peptide spans 1–24 (MKLTLVQIFFMMLLLLLGLGVGLG).

It belongs to the pancreatic ribonuclease family. The N-terminus is blocked. Glycosylated. In terms of tissue distribution, male-specific expression in proximal caput of the epididymis.

The protein resides in the secreted. Its function is as follows. Secreted proximal epididymal protein required for post-testicular sperm maturation and male fertility. May be involved in sperm adhesion to the egg zona pellucida. Does not have ribonuclease activity. In Ovis aries (Sheep), this protein is Inactive ribonuclease-like protein 10 (RNASE10).